Here is a 1377-residue protein sequence, read N- to C-terminus: DNA-directed RNA polymerase subunit beta (1377 aa).

Belongs to the RNA polymerase beta chain family. In terms of assembly, the RNAP catalytic core consists of 2 alpha, 1 beta, 1 beta' and 1 omega subunit. When a sigma factor is associated with the core the holoenzyme is formed, which can initiate transcription.

The catalysed reaction is RNA(n) + a ribonucleoside 5'-triphosphate = RNA(n+1) + diphosphate. DNA-dependent RNA polymerase catalyzes the transcription of DNA into RNA using the four ribonucleoside triphosphates as substrates. The polypeptide is DNA-directed RNA polymerase subunit beta (Brucella abortus (strain S19)).